Reading from the N-terminus, the 628-residue chain is Monoterpene synthase like 2, chloroplastic (628 aa).

3 residues coordinate Mg(2+): Asp379, Asp383, and Asp531. Residues 379-383 carry the DDXXD motif motif; it reads DDIYD.

The protein belongs to the terpene synthase family. Tpsd subfamily. The cofactor is Mg(2+). It depends on Mn(2+) as a cofactor.

It localises to the plastid. The protein localises to the chloroplast. The protein operates within terpene metabolism; oleoresin biosynthesis. It participates in secondary metabolite biosynthesis; terpenoid biosynthesis. Monoterpene synthase (TPS) involved in the biosynthesis of monoterpene natural products included in conifer oleoresin secretions and volatile emissions; these compounds contribute to biotic and abiotic stress defense against herbivores and pathogens. The protein is Monoterpene synthase like 2, chloroplastic of Pinus banksiana (Jack pine).